The chain runs to 799 residues: MDEDGLELQQQAPNSFFDATGAGATHMDGNQIVVEVQETVYVSDVVDSDITVHNYVPDDPDSVVIQDVIEDVVIEDVQCTDIMDEADVSETVIIPEQVLDSDVTEEVSLTHCTVPDDVLASDITSASISMPEHVLTSESIHVSDVGHVEHVVHDSVVEAEIVTDPLAADVVSEEVLVADCASEAVIDANGIPVNQQDEEKNNCEDYLMISLDDAGKIEHDGSSGLTMDNETEIDPCKVDGTCPEVIKVYIFKADPGEDDLGGTVDIVESEPENEHGVELLDPNNSIRVPREKMVYMAVNDSQQEEEELNVAEIADEVYMEVIVGEEDAAAAAAAAVHEQQVEDNEMKTFMPIAWAAAYGNNSDGIENRNGTASALLHIDESAGLGRLAKQKPKKRRRPDSRQYQTAIIIGPDGHPLTVYPCMICGKKFKSRGFLKRHMKNHPEHLAKKKYRCTDCDYTTNKKISLHNHLESHKLTSKAEKAIECDECGKHFSHAGALFTHKMVHKEKGANKMHKCKFCEYETAEQGLLNRHLLAVHSKNFPHICVECGKGFRHPSELKKHMRIHTGEKPYECQYCEYRSADSSNLKTHVKTKHSKEMPFKCDICLLTFSDTKEVQQHALVHQESKTHQCLHCDHKSSNSSDLKRHIISVHTKDYPHKCDMCDKGFHRPSELKKHVAAHKGKKMHQCRHCDFKIADPFVLSRHILSVHTKDLPFRCKRCRKGFRQQSELKKHMKTHSGRKVYQCEYCEYSTTDASGFKRHVISIHTKDYPHRCEYCKKGFRRPSEKNQHIMRHHKEVGLP.

Phosphoserine is present on Ser269. C2H2-type zinc fingers lie at residues 419 to 444 (YPCM…HPEH), 450 to 472 (YRCT…LESH), 482 to 504 (IECD…KMVH), 513 to 536 (HKCK…LAVH), 542 to 564 (HICV…MRIH), 570 to 593 (YECQ…KTKH), 599 to 621 (FKCD…ALVH), 627 to 650 (HQCL…ISVH), 656 to 678 (HKCD…VAAH), 684 to 707 (HQCR…LSVH), 713 to 735 (FRCK…MKTH), 741 to 764 (YQCE…ISIH), and 770 to 792 (HRCE…IMRH).

The protein belongs to the krueppel C2H2-type zinc-finger protein family. ZFX/ZFY subfamily.

It localises to the nucleus. Its function is as follows. Probable transcriptional activator. The protein is Zinc finger X-chromosomal protein (Zfx) of Mus musculus (Mouse).